Consider the following 453-residue polypeptide: UPF0210 protein Pcar_2119 (453 aa).

It belongs to the UPF0210 family. As to quaternary structure, homodimer.

The sequence is that of UPF0210 protein Pcar_2119 from Syntrophotalea carbinolica (strain DSM 2380 / NBRC 103641 / GraBd1) (Pelobacter carbinolicus).